A 128-amino-acid polypeptide reads, in one-letter code: Fluoride-specific ion channel FluC (128 aa).

4 helical membrane-spanning segments follow: residues 4-24, 37-57, 72-92, and 101-121; these read LLLVAAGGALGSVARYLVGVQ, TFIVNLTGGLLMGLLAAWLAL, VGVMGGFTTFSAFSLETALMI, and FTYTTASVILSVAAIFAGLLI. Na(+)-binding residues include glycine 76 and threonine 79.

This sequence belongs to the fluoride channel Fluc/FEX (TC 1.A.43) family.

Its subcellular location is the cell inner membrane. The catalysed reaction is fluoride(in) = fluoride(out). With respect to regulation, na(+) is not transported, but it plays an essential structural role and its presence is essential for fluoride channel function. In terms of biological role, fluoride-specific ion channel. Important for reducing fluoride concentration in the cell, thus reducing its toxicity. In Caulobacter sp. (strain K31), this protein is Fluoride-specific ion channel FluC.